Reading from the N-terminus, the 738-residue chain is Polyphosphate kinase (738 aa).

Residues 1 to 48 (MIGNDRWVTEIETGPVTEARPDTNAREPGDRTPAAPPAATPAATTDQL) are disordered. Basic and acidic residues predominate over residues 19 to 30 (ARPDTNAREPGD). Asn-91 contacts ATP. Mg(2+) is bound by residues Arg-427 and Arg-457. His-487 acts as the Phosphohistidine intermediate in catalysis. Tyr-520, Arg-620, and His-648 together coordinate ATP.

It belongs to the polyphosphate kinase 1 (PPK1) family. Requires Mg(2+) as cofactor. Post-translationally, an intermediate of this reaction is the autophosphorylated ppk in which a phosphate is covalently linked to a histidine residue through a N-P bond.

The catalysed reaction is [phosphate](n) + ATP = [phosphate](n+1) + ADP. Its function is as follows. Catalyzes the reversible transfer of the terminal phosphate of ATP to form a long-chain polyphosphate (polyP). The polypeptide is Polyphosphate kinase (Mycobacterium ulcerans (strain Agy99)).